The sequence spans 260 residues: Transcription factor MYB4 (260 aa).

HTH myb-type domains follow at residues 12–64 (AVEV…LNYL) and 65–119 (RPGI…SKRS). 2 consecutive DNA-binding regions (H-T-H motif) follow at residues 40–64 (WRML…LNYL) and 92–115 (WSII…NTHL).

Its subcellular location is the nucleus. Functionally, transcription activator involved in the spatiotemporal regulation of flavonoid biosynthesis specifically in the corms of Montbretia. Activates the promoters of enzymes involved in the biosynthesis of the flavonol myricetin and the flavonol-glycoside montbretin A (MbA). MbA is a potent inhibitor of human pancreatic alpha-amylase and is being developed as drug candidate to treat type-2 diabetes. The protein is Transcription factor MYB4 of Crocosmia x crocosmiiflora (Montbretia).